A 569-amino-acid chain; its full sequence is Proline--tRNA ligase (569 aa).

This sequence belongs to the class-II aminoacyl-tRNA synthetase family. ProS type 1 subfamily. In terms of assembly, homodimer.

The protein resides in the cytoplasm. It catalyses the reaction tRNA(Pro) + L-proline + ATP = L-prolyl-tRNA(Pro) + AMP + diphosphate. Catalyzes the attachment of proline to tRNA(Pro) in a two-step reaction: proline is first activated by ATP to form Pro-AMP and then transferred to the acceptor end of tRNA(Pro). As ProRS can inadvertently accommodate and process non-cognate amino acids such as alanine and cysteine, to avoid such errors it has two additional distinct editing activities against alanine. One activity is designated as 'pretransfer' editing and involves the tRNA(Pro)-independent hydrolysis of activated Ala-AMP. The other activity is designated 'posttransfer' editing and involves deacylation of mischarged Ala-tRNA(Pro). The misacylated Cys-tRNA(Pro) is not edited by ProRS. The protein is Proline--tRNA ligase of Colwellia psychrerythraea (strain 34H / ATCC BAA-681) (Vibrio psychroerythus).